A 187-amino-acid chain; its full sequence is Dihydrofolate reductase 2, mitochondrial (187 aa).

Positions 4–185 (LLNCIVAVSQ…IKYKFEVCEK (182 aa)) constitute a DHFR domain. NADP(+) is bound by residues Ala10 and 16–22 (GIGKNGD). 31 to 36 (EFRYFQ) provides a ligand contact to substrate. An NADP(+)-binding site is contributed by 55-57 (RKT). Position 71 (Arg71) interacts with substrate. Residues 77–79 (SRE) and 117–124 (GGSSVYKE) each bind NADP(+).

The protein belongs to the dihydrofolate reductase family. In terms of tissue distribution, expressed in numerous cell lines.

The protein resides in the mitochondrion. The protein localises to the mitochondrion matrix. It is found in the mitochondrion inner membrane. The enzyme catalyses (6S)-5,6,7,8-tetrahydrofolate + NADP(+) = 7,8-dihydrofolate + NADPH + H(+). It participates in cofactor biosynthesis; tetrahydrofolate biosynthesis; 5,6,7,8-tetrahydrofolate from 7,8-dihydrofolate: step 1/1. In terms of biological role, key enzyme in folate metabolism. Contributes to the de novo mitochondrial thymidylate biosynthesis pathway. Required to prevent uracil accumulation in mtDNA. Binds its own mRNA and that of DHFR. The protein is Dihydrofolate reductase 2, mitochondrial of Homo sapiens (Human).